We begin with the raw amino-acid sequence, 206 residues long: Ribosomal RNA small subunit methyltransferase G (206 aa).

Residues G73, L78, 124–125 (VE), and R139 contribute to the S-adenosyl-L-methionine site.

It belongs to the methyltransferase superfamily. RNA methyltransferase RsmG family.

The protein localises to the cytoplasm. The catalysed reaction is guanosine(527) in 16S rRNA + S-adenosyl-L-methionine = N(7)-methylguanosine(527) in 16S rRNA + S-adenosyl-L-homocysteine. Specifically methylates the N7 position of guanine in position 527 of 16S rRNA. The chain is Ribosomal RNA small subunit methyltransferase G from Pectobacterium atrosepticum (strain SCRI 1043 / ATCC BAA-672) (Erwinia carotovora subsp. atroseptica).